The following is a 45-amino-acid chain: Large ribosomal subunit protein bL34 (45 aa).

This sequence belongs to the bacterial ribosomal protein bL34 family.

The protein is Large ribosomal subunit protein bL34 of Clavibacter michiganensis subsp. michiganensis (strain NCPPB 382).